The primary structure comprises 124 residues: MEAKAVARTIRIAPRKVRLVLDLIRGKEVAEAIAILKLTNKASSPVVEKLLMSALANAEHNYDMNIDSLVVKEAYANEGPTLKRFRPRAQGRASAINKRTSHITIVVADKEVKTSNTEAQEEAK.

The protein belongs to the universal ribosomal protein uL22 family. As to quaternary structure, part of the 50S ribosomal subunit.

Functionally, this protein binds specifically to 23S rRNA; its binding is stimulated by other ribosomal proteins, e.g. L4, L17, and L20. It is important during the early stages of 50S assembly. It makes multiple contacts with different domains of the 23S rRNA in the assembled 50S subunit and ribosome. In terms of biological role, the globular domain of the protein is located near the polypeptide exit tunnel on the outside of the subunit, while an extended beta-hairpin is found that lines the wall of the exit tunnel in the center of the 70S ribosome. The sequence is that of Large ribosomal subunit protein uL22 from Macrococcus caseolyticus (strain JCSC5402) (Macrococcoides caseolyticum).